We begin with the raw amino-acid sequence, 378 residues long: Alginate lyase (378 aa).

An N-terminal signal peptide occupies residues 1–28 (MQTPKLIRPTLLSMAIVSSMAWATGASA). Substrate contacts are provided by residues 67–68 (SK), 140–141 (HT), and tyrosine 258.

Belongs to the polysaccharide lyase 5 family.

It is found in the periplasm. The catalysed reaction is Eliminative cleavage of alginate to give oligosaccharides with 4-deoxy-alpha-L-erythro-hex-4-enuronosyl groups at their non-reducing ends and beta-D-mannuronate at their reducing end.. Its function is as follows. Catalyzes the depolymerization of alginate by cleaving the beta-1,4 glycosidic bond between two adjacent sugar residues via a beta-elimination mechanism. May serve to degrade mislocalized alginate that is trapped in the periplasmic space. In Pseudomonas syringae pv. tomato (strain ATCC BAA-871 / DC3000), this protein is Alginate lyase.